Here is a 391-residue protein sequence, read N- to C-terminus: Lipid-A-disaccharide synthase (391 aa).

The protein belongs to the LpxB family.

It catalyses the reaction a lipid X + a UDP-2-N,3-O-bis[(3R)-3-hydroxyacyl]-alpha-D-glucosamine = a lipid A disaccharide + UDP + H(+). Its pathway is bacterial outer membrane biogenesis; LPS lipid A biosynthesis. Condensation of UDP-2,3-diacylglucosamine and 2,3-diacylglucosamine-1-phosphate to form lipid A disaccharide, a precursor of lipid A, a phosphorylated glycolipid that anchors the lipopolysaccharide to the outer membrane of the cell. The sequence is that of Lipid-A-disaccharide synthase from Rickettsia akari (strain Hartford).